The sequence spans 294 residues: Probable aspartoacylase (294 aa).

The Zn(2+) site is built by His14 and Glu17. Residues Arg56 and 63–64 (NR) each bind substrate. His106 lines the Zn(2+) pocket. 2 residues coordinate substrate: Glu164 and Tyr275.

It belongs to the AspA/AstE family. Aspartoacylase subfamily. Requires Zn(2+) as cofactor.

The catalysed reaction is an N-acyl-L-aspartate + H2O = a carboxylate + L-aspartate. The protein is Probable aspartoacylase of Nostoc sp. (strain PCC 7120 / SAG 25.82 / UTEX 2576).